A 138-amino-acid polypeptide reads, in one-letter code: Cysteine desulfuration protein SufE (138 aa).

The active-site Cysteine persulfide intermediate is Cys51.

The protein belongs to the SufE family. Homodimer. Interacts with SufS.

The protein resides in the cytoplasm. It participates in cofactor biosynthesis; iron-sulfur cluster biosynthesis. Its function is as follows. Participates in cysteine desulfuration mediated by SufS. Cysteine desulfuration mobilizes sulfur from L-cysteine to yield L-alanine and constitutes an essential step in sulfur metabolism for biosynthesis of a variety of sulfur-containing biomolecules. Functions as a sulfur acceptor for SufS, by mediating the direct transfer of the sulfur atom from the S-sulfanylcysteine of SufS, an intermediate product of cysteine desulfuration process. The sequence is that of Cysteine desulfuration protein SufE from Escherichia fergusonii (strain ATCC 35469 / DSM 13698 / CCUG 18766 / IAM 14443 / JCM 21226 / LMG 7866 / NBRC 102419 / NCTC 12128 / CDC 0568-73).